We begin with the raw amino-acid sequence, 653 residues long: Forkhead box protein O1 (653 aa).

2 disordered regions span residues 1–64 and 117–156; these read MAEA…ASAA and LHPA…SRRN. At T24 the chain carries Phosphothreonine; by PKB/AKT1 or PKB/AKT2 and SGK1. Positions 35 to 64 are enriched in low complexity; it reads SNSATSSPAPSGGATANPDASAGLPPASAA. Residues 119–140 are compositionally biased toward pro residues; it reads PAPPQPPPPGPLSQHPPVPPAA. A DNA-binding region (fork-head) is located at residues 157–233; it reads AWGNLSYADL…VQNEGTGKSS (77 aa). DNA-binding stretches follow at residues 209–216 and 232–235; these read NSIRHNLS and SSWW. S210 is modified (phosphoserine; by STK4/MST1). 3 positions are modified to phosphoserine: S216, S232, and S233. Residues 232–335 are disordered; it reads SSWWMLNPEG…FSPIMTEQDD (104 aa). An N6-acetyllysine mark is found at K243 and K246. At S247 the chain carries Phosphoserine; by CDK1. Omega-N-methylarginine; by PRMT1 is present on residues R249 and R251. The Nuclear localization signal motif lies at 249 to 251; that stretch reads RRR. A Phosphoserine; by PKB/AKT1 and SGK1 modification is found at S254. N6-acetyllysine occurs at positions 260, 263, and 272. A sufficient for interaction with NLK region spans residues 281-561; sequence GAGDSPGSQF…RLTPVKTPLQ (281 aa). 2 positions are modified to phosphoserine: S285 and S296. Polar residues predominate over residues 307–324; that stretch reads NWSTFRPRTSSNASTISG. A Phosphoserine; by PKB/AKT1 or PKB/AKT2 modification is found at S317. S320 bears the Phosphoserine; by CK1 and SGK1 mark. S323 is modified (phosphoserine). Phosphoserine; by DYRK1A is present on S327. At T331 the chain carries Phosphothreonine. The tract at residues 361-457 is required for interaction with RUNX2; sequence SEISNPENME…GGLNQFNCAQ (97 aa). K421 is modified (N6-acetyllysine). Positions 460 to 464 match the Required for interaction with SIRT1 motif; it reads LKELL.

As to quaternary structure, interacts with LRPPRC. Interacts with RUNX2; the interaction inhibits RUNX2 transcriptional activity and mediates the IGF1/insulin-dependent BGLAP expression in osteoblasts Interacts with PPP2R1A; the interaction regulates the dephosphorylation of FOXO1 at Thr-24 and Ser-254 leading to its nuclear import. Interacts with NLK. Interacts with SIRT1; the interaction results in the deacetylation of FOXO1 leading to activation of FOXO1-mediated transcription of genes involved in DNA repair and stress resistance. Binds to CDK1. Interacts with the 14-3-3 proteins, YWHAG and YWHAZ; the interactions require insulin-stimulated phosphorylation on Thr-24, promote nuclear exit and loss of transcriptional activity. Interacts with SKP2; the interaction ubiquitinates FOXO1 leading to its proteasomal degradation. The interaction requires the presence of KRIT1. Interacts (via the C-terminal half) with ATF4 (via its DNA-binding domain); the interaction occurs in osteoblasts, regulates glucose homeostasis via suppression of beta-cell proliferation and subsequent decrease in insulin production. Interacts with PRMT1; the interaction methylates FOXO1, prevents PKB/AKT1 phosphorylation and retains FOXO1 in the nucleus. Interacts with EP300 and CREBBP; the interactions acetylate FOXO1. Interacts with SIRT2; the interaction is disrupted in response to oxidative stress or serum deprivation, leading to increased level of acetylated FOXO1, which promotes stress-induced autophagy by stimulating E1-like activating enzyme ATG7. Interacts (acetylated form) with ATG7; the interaction is increased in response to oxidative stress or serum deprivation and promotes the autophagic process leading to cell death. Interacts (acetylated form) with PPARG. Interacts with XBP1; this interaction is direct and leads to FOXO1 ubiquitination and degradation via the proteasome pathway. Interacts with WDFY2. Forms a complex with WDFY2 and AKT1. Interacts with CRY1. Interacts with PPIA/CYPA; the interaction promotes FOXO1 dephosphorylation, nuclear accumulation and transcriptional activity. Interacts with TOX4; FOXO1 is required for full induction of TOX4-dependent activity and the interaction is inhibited by insulin. Interacts (when phosphorylated on Ser-254) with STUB1/CHIP. In terms of processing, phosphorylation by NLK promotes nuclear export and inhibits the transcriptional activity. In response to growth factors, phosphorylation on Thr-24, Ser-254 and Ser-320 by PKB/AKT1 promotes nuclear export and inactivation of transactivational activity. Phosphorylation on Thr-24 is required for binding 14-3-3 proteins. Phosphorylation of Ser-254 decreases DNA-binding activity and promotes the phosphorylation of Thr-24 and Ser-317, permitting phosphorylation of Ser-320 and Ser-323, probably by CDK1, leading to nuclear exclusion and loss of function. Stress signals, such as response to oxygen or nitric oxide, attenuate the PKB/AKT1-mediated phosphorylation leading to nuclear retention. Phosphorylation of Ser-327 is independent of IGF1 and leads to reduced function. Dephosphorylated on Thr-24 and Ser-254 by PP2A in beta-cells under oxidative stress leading to nuclear retention. Phosphorylation of Ser-247 by CDK1 disrupts binding of 14-3-3 proteins leading to nuclear accumulation and has no effect on DNA binding nor transcriptional activity. Phosphorylation by STK4/MST1 on Ser-210, upon oxidative stress, inhibits binding to 14-3-3 proteins and nuclear export. PPIA/CYPA promotes its dephosphorylation on Ser-254. Post-translationally, ubiquitinated by SKP2. Ubiquitination leads to proteasomal degradation. Ubiquitinated by STUB1/CHIP; when Ser-254 is phosphorylated. Methylation inhibits AKT1-mediated phosphorylation at Ser-254 and is increased by oxidative stress. In terms of processing, acetylated. Acetylation at Lys-260 and Lys-272 are necessary for autophagic cell death induction. Deacetylated by SIRT2 in response to oxidative stress or serum deprivation, thereby negatively regulating FOXO1-mediated autophagic cell death. Once in the nucleus, acetylated by CREBBP/EP300. Acetylation diminishes the interaction with target DNA and attenuates the transcriptional activity. It increases the phosphorylation at Ser-254. Deacetylation by SIRT1 results in reactivation of the transcriptional activity. Oxidative stress by hydrogen peroxide treatment appears to promote deacetylation and uncoupling of insulin-induced phosphorylation. By contrast, resveratrol acts independently of acetylation. Acetylated at Lys-421, promoting its localization to the nucleus and transcription factor activity. Deacetylation at Lys-421 by SIRT6, promotes its translocation into the cytoplasm, preventing its transcription factor activity. Deacetylation and subsequent inhibition by SIRT6 has different effects depending on cell types: it inhibits gluconeogenesis in hepatocytes, promotes glucose sensing in pancreatic beta-cells and regulates lipid catabolism in brown adipocytes.

It is found in the cytoplasm. It localises to the nucleus. In terms of biological role, transcription factor that is the main target of insulin signaling and regulates metabolic homeostasis in response to oxidative stress. Binds to the insulin response element (IRE) with consensus sequence 5'-TT[G/A]TTTTG-3' and the related Daf-16 family binding element (DBE) with consensus sequence 5'-TT[G/A]TTTAC-3'. Activity suppressed by insulin. Main regulator of redox balance and osteoblast numbers and controls bone mass. Orchestrates the endocrine function of the skeleton in regulating glucose metabolism. Also acts as a key regulator of chondrogenic commitment of skeletal progenitor cells in response to lipid availability: when lipids levels are low, translocates to the nucleus and promotes expression of SOX9, which induces chondrogenic commitment and suppresses fatty acid oxidation. Acts synergistically with ATF4 to suppress osteocalcin/BGLAP activity, increasing glucose levels and triggering glucose intolerance and insulin insensitivity. Also suppresses the transcriptional activity of RUNX2, an upstream activator of osteocalcin/BGLAP. Acts as an inhibitor of glucose sensing in pancreatic beta cells by acting as a transcription repressor and suppressing expression of PDX1. In hepatocytes, promotes gluconeogenesis by acting together with PPARGC1A and CEBPA to activate the expression of genes such as IGFBP1, G6PC1 and PCK1. Also promotes gluconeogenesis by directly promoting expression of PPARGC1A and G6PC1. Important regulator of cell death acting downstream of CDK1, PKB/AKT1 and STK4/MST1. Promotes neural cell death. Mediates insulin action on adipose tissue. Regulates the expression of adipogenic genes such as PPARG during preadipocyte differentiation and, adipocyte size and adipose tissue-specific gene expression in response to excessive calorie intake. Regulates the transcriptional activity of GADD45A and repair of nitric oxide-damaged DNA in beta-cells. Required for the autophagic cell death induction in response to starvation or oxidative stress in a transcription-independent manner. Mediates the function of MLIP in cardiomyocytes hypertrophy and cardiac remodeling. Positive regulator of apoptosis in cardiac smooth muscle cells as a result of its transcriptional activation of pro-apoptotic genes. Regulates endothelial cell (EC) viability and apoptosis in a PPIA/CYPA-dependent manner via transcription of CCL2 and BCL2L11 which are involved in EC chemotaxis and apoptosis. The chain is Forkhead box protein O1 (FOXO1) from Ictidomys tridecemlineatus (Thirteen-lined ground squirrel).